The chain runs to 125 residues: Large ribosomal subunit protein bL12 (125 aa).

The protein belongs to the bacterial ribosomal protein bL12 family. As to quaternary structure, homodimer. Part of the ribosomal stalk of the 50S ribosomal subunit. Forms a multimeric L10(L12)X complex, where L10 forms an elongated spine to which 2 to 4 L12 dimers bind in a sequential fashion. Binds GTP-bound translation factors.

Forms part of the ribosomal stalk which helps the ribosome interact with GTP-bound translation factors. Is thus essential for accurate translation. This is Large ribosomal subunit protein bL12 from Thermoanaerobacter pseudethanolicus (strain ATCC 33223 / 39E) (Clostridium thermohydrosulfuricum).